The following is a 635-amino-acid chain: Threonine--tRNA ligase (635 aa).

One can recognise a TGS domain in the interval 1 to 61 (MINISFPDGS…DNDCRLRILT (61 aa)). The catalytic stretch occupies residues 242-533 (DHRKLGKELD…LIEEYAGRFP (292 aa)). Residues Cys333, His384, and His510 each coordinate Zn(2+).

It belongs to the class-II aminoacyl-tRNA synthetase family. Homodimer. The cofactor is Zn(2+).

The protein localises to the cytoplasm. It catalyses the reaction tRNA(Thr) + L-threonine + ATP = L-threonyl-tRNA(Thr) + AMP + diphosphate + H(+). Its function is as follows. Catalyzes the attachment of threonine to tRNA(Thr) in a two-step reaction: L-threonine is first activated by ATP to form Thr-AMP and then transferred to the acceptor end of tRNA(Thr). Also edits incorrectly charged L-seryl-tRNA(Thr). The polypeptide is Threonine--tRNA ligase (Rickettsia bellii (strain RML369-C)).